Reading from the N-terminus, the 89-residue chain is Small ribosomal subunit protein uS17 (89 aa).

This sequence belongs to the universal ribosomal protein uS17 family. Part of the 30S ribosomal subunit.

One of the primary rRNA binding proteins, it binds specifically to the 5'-end of 16S ribosomal RNA. The chain is Small ribosomal subunit protein uS17 from Aromatoleum aromaticum (strain DSM 19018 / LMG 30748 / EbN1) (Azoarcus sp. (strain EbN1)).